Here is a 389-residue protein sequence, read N- to C-terminus: NADH-quinone oxidoreductase subunit D (389 aa).

This sequence belongs to the complex I 49 kDa subunit family. NDH-1 is composed of 14 different subunits. Subunits NuoB, C, D, E, F, and G constitute the peripheral sector of the complex.

It is found in the cell inner membrane. It catalyses the reaction a quinone + NADH + 5 H(+)(in) = a quinol + NAD(+) + 4 H(+)(out). NDH-1 shuttles electrons from NADH, via FMN and iron-sulfur (Fe-S) centers, to quinones in the respiratory chain. The immediate electron acceptor for the enzyme in this species is believed to be ubiquinone. Couples the redox reaction to proton translocation (for every two electrons transferred, four hydrogen ions are translocated across the cytoplasmic membrane), and thus conserves the redox energy in a proton gradient. The sequence is that of NADH-quinone oxidoreductase subunit D from Rickettsia prowazekii (strain Madrid E).